The following is a 424-amino-acid chain: Oleosin-B3 (424 aa).

Positions 1-37 are polar; sequence MRNEIQNETAQTDQTQGSMFSFFNLFPFLLPMFEVIK. 3 helical membrane passes run 16 to 36, 38 to 58, and 69 to 89; these read QGSM…FEVI, MVVA…TLSG, and LFII…VLAA. Residues 38–119 are hydrophobic; the sequence is MVVASVASVV…GIPESIKPSN (82 aa). Tandem repeats lie at residues 111–120, 121–130, 131–140, 141–150, 196–202, 203–209, 210–216, 217–223, 241–258, 259–276, 277–294, 301–318, 319–336, 337–354, 396–400, 401–405, 406–410, and 411–415. The interval 111–150 is 4 X 10 AA tandem repeats of I-P-[EV]-S-I-K-P-S-N-[IV]; it reads IPESIKPSNVIPESIKPSNIIPESIKPSNIIPVSIKPSNI. The disordered stretch occupies residues 164 to 424; sequence KIKAKQEEKS…SSHGSGGKHI (261 aa). Residues 167 to 220 are compositionally biased toward basic and acidic residues; sequence AKQEEKSKGKSEDSSKGKGKSKGEDTTTDEDKHGKGESKHGKGESKHGKGESTH. The interval 196-223 is 4 X 7 AA tandem repeats of E-[SD]-[KT]-H-G-K-G; it reads EDKHGKGESKHGKGESKHGKGESTHGKG. The 6 X 18 AA tandem repeats of [KR]-H-[EG]-[SG]-G-G-[SA]-[PSA]-M-G-G-G-K-H-[GE]-S-[GV]-G stretch occupies residues 241 to 354; sequence KHGSGGSPMG…MGGGKHGSGG (114 aa). Positions 242-255 are enriched in gly residues; that stretch reads HGSGGSPMGGGKHG. A compositionally biased stretch (basic and acidic residues) spans 288-304; the sequence is GKHESVGKHGSGGKHES. The segment covering 341-355 has biased composition (gly residues); it reads GGSAMGGGKHGSGGK. Low complexity predominate over residues 391-416; sequence SSTSESSDGSSSDGSSSDGSSSDGSS. A 4 X 5 AA tandem repeats of S-S-D-G-S region spans residues 396–415; sequence SSDGSSSDGSSSDGSSSDGS.

It belongs to the oleosin family. As to expression, the full-length protein is found in the tapetal lipid bodies of immature anthers, the proteolytically cleaved C-terminal product is found on the coats of pollen grains. No expression is detected in other flower organs, siliques or seedlings.

It localises to the lipid droplet. The protein localises to the membrane. In terms of biological role, many of the major pollen coat proteins are derived from endoproteolytic cleavage of oleosin-like proteins. The protein is Oleosin-B3 of Brassica napus (Rape).